Consider the following 81-residue polypeptide: Photosystem I iron-sulfur center (81 aa).

2 consecutive 4Fe-4S ferredoxin-type domains span residues 2 to 31 and 39 to 68; these read SHSV…MIPW and IASA…VRVY. 8 residues coordinate [4Fe-4S] cluster: Cys-11, Cys-14, Cys-17, Cys-21, Cys-48, Cys-51, Cys-54, and Cys-58.

As to quaternary structure, the eukaryotic PSI reaction center is composed of at least 11 subunits. [4Fe-4S] cluster is required as a cofactor.

It localises to the plastid. Its subcellular location is the chloroplast thylakoid membrane. It carries out the reaction reduced [plastocyanin] + hnu + oxidized [2Fe-2S]-[ferredoxin] = oxidized [plastocyanin] + reduced [2Fe-2S]-[ferredoxin]. Its function is as follows. Apoprotein for the two 4Fe-4S centers FA and FB of photosystem I (PSI); essential for photochemical activity. FB is the terminal electron acceptor of PSI, donating electrons to ferredoxin. The C-terminus interacts with PsaA/B/D and helps assemble the protein into the PSI complex. Required for binding of PsaD and PsaE to PSI. PSI is a plastocyanin-ferredoxin oxidoreductase, converting photonic excitation into a charge separation, which transfers an electron from the donor P700 chlorophyll pair to the spectroscopically characterized acceptors A0, A1, FX, FA and FB in turn. The chain is Photosystem I iron-sulfur center from Zea mays (Maize).